The following is a 220-amino-acid chain: Small ribosomal subunit protein uS3 (220 aa).

The 69-residue stretch at 39-107 (IREHVEGRLK…RVHINISEIK (69 aa)) folds into the KH type-2 domain.

The protein belongs to the universal ribosomal protein uS3 family. In terms of assembly, part of the 30S ribosomal subunit. Forms a tight complex with proteins S10 and S14.

Functionally, binds the lower part of the 30S subunit head. Binds mRNA in the 70S ribosome, positioning it for translation. This chain is Small ribosomal subunit protein uS3, found in Shouchella clausii (strain KSM-K16) (Alkalihalobacillus clausii).